The sequence spans 470 residues: Histone deacetylase HOS1 (470 aa).

The tract at residues 47–392 is histone deacetylase; the sequence is LTFPYARKDD…YTYLTWCVTK (346 aa). Ser110 is subject to Phosphoserine. His211 is an active-site residue.

The protein belongs to the histone deacetylase family. HD type 1 subfamily.

The protein resides in the nucleus. The enzyme catalyses N(6)-acetyl-L-lysyl-[histone] + H2O = L-lysyl-[histone] + acetate. In terms of biological role, responsible for the deacetylation of lysine residues on the N-terminal part of the core histones (H2A, H2B, H3 and H4). Histone deacetylation plays an important role in transcriptional regulation, cell cycle progression and developmental events. Histone deacetylases act via the formation of large multiprotein complexes. In Saccharomyces cerevisiae (strain ATCC 204508 / S288c) (Baker's yeast), this protein is Histone deacetylase HOS1 (HOS1).